The chain runs to 98 residues: Class II hydrophobin 3 (98 aa).

Positions 1–18 (MQFTTTTLIAILSALAVA) are cleaved as a signal peptide. N-linked (GlcNAc...) asparagine glycosylation is found at asparagine 26 and asparagine 54. 4 disulfides stabilise this stretch: cysteine 35/cysteine 83, cysteine 44/cysteine 74, cysteine 45/cysteine 57, and cysteine 84/cysteine 95.

Belongs to the cerato-ulmin hydrophobin family.

The protein localises to the secreted. It is found in the cell wall. Functionally, aerial growth, conidiation, and dispersal of filamentous fungi in the environment rely upon a capability of their secreting small amphipathic proteins called hydrophobins (HPBs) with low sequence identity. Class I can self-assemble into an outermost layer of rodlet bundles on aerial cell surfaces, conferring cellular hydrophobicity that supports fungal growth, development and dispersal; whereas Class II form highly ordered films at water-air interfaces through intermolecular interactions but contribute nothing to the rodlet structure. In Botryotinia fuckeliana, hydrophobins are not involved in conferring surface hydrophobicity to conidia and aerial hyphae and their function in sclerotia and fruiting bodies remains to be investigated. The polypeptide is Class II hydrophobin 3 (Botryotinia fuckeliana (strain B05.10) (Noble rot fungus)).